The chain runs to 298 residues: Probable protein phosphatase 2C 26 (298 aa).

A PPM-type phosphatase domain is found at 48 to 295 (SVGIHAIPHP…DDVTVIVAKV (248 aa)). The Mn(2+) site is built by D82, G83, D213, and D286.

Belongs to the PP2C family. The cofactor is Mg(2+). It depends on Mn(2+) as a cofactor.

The enzyme catalyses O-phospho-L-seryl-[protein] + H2O = L-seryl-[protein] + phosphate. It catalyses the reaction O-phospho-L-threonyl-[protein] + H2O = L-threonyl-[protein] + phosphate. In Arabidopsis thaliana (Mouse-ear cress), this protein is Probable protein phosphatase 2C 26.